We begin with the raw amino-acid sequence, 218 residues long: Thymidylate kinase (218 aa).

15–22 contributes to the ATP binding site; that stretch reads GLDRSGKS.

This sequence belongs to the thymidylate kinase family.

The catalysed reaction is dTMP + ATP = dTDP + ADP. The protein operates within pyrimidine metabolism; dTTP biosynthesis. Its function is as follows. Catalyzes the conversion of dTMP to dTDP. The chain is Thymidylate kinase from Caenorhabditis elegans.